Here is a 654-residue protein sequence, read N- to C-terminus: Collagen alpha-1(XXV) chain (654 aa).

Residues M1–H26 are disordered. Topologically, residues M1 to P33 are cytoplasmic. The chain crosses the membrane as a helical; Signal-anchor for type II membrane protein span at residues C34 to V54. The Extracellular portion of the chain corresponds to K55–K654. Residue E113 is modified to Pyrrolidone carboxylic acid (Glu). A disordered region spans residues S116 to P168. Positions P121–R164 constitute a Collagen-like 1 domain. Over residues P140–P151 the composition is skewed to pro residues. The interval L181–K188 is interaction with amyloid-beta peptide. 2 disordered regions span residues G189 to T426 and L445 to K654. 5 Collagen-like domains span residues G192–S247, G249–S308, G311–P370, R372–A425, and V447–P505. Residues P196–P208 show a composition bias toward pro residues. A compositionally biased stretch (low complexity) spans P230–K245. Residues E280–A290 are compositionally biased toward basic and acidic residues. A compositionally biased stretch (low complexity) spans L336 to P358. Composition is skewed to basic and acidic residues over residues K361–E377 and S398–D407. The segment covering Q457–Q466 has biased composition (low complexity). The span at G494–G503 shows a compositional bias: gly residues. The span at S517 to I527 shows a compositional bias: low complexity. A compositionally biased stretch (pro residues) spans I528–M543. The Collagen-like 7 domain occupies G571–P630. Basic and acidic residues predominate over residues R603–E626.

Forms homodimers and homotrimers. Binds to the fibrillized forms of amyloid-beta protein 40 (beta-APP40) and amyloid-beta protein 42 (beta-APP42). Found associated with beta-APP42 more frequently than with beta-APP40. Post-translationally, undergoes proteolytic cleavage by furin protease to yield the soluble collagen-like Alzheimer amyloid plaque component. Glycosylated. In terms of processing, hydroxylated on 11% of proline residues and 49% of lysine residues. Expressed predominantly in brain. Deposited preferentially in primitive or neuritic amyloid plaques which are typical of Alzheimer disease.

The protein localises to the membrane. Its function is as follows. Inhibits fibrillization of amyloid-beta peptide during the elongation phase. Has also been shown to assemble amyloid fibrils into protease-resistant aggregates. Binds heparin. The polypeptide is Collagen alpha-1(XXV) chain (Homo sapiens (Human)).